The chain runs to 565 residues: Periplasmic trehalase (565 aa).

Residues 1 to 30 (MKSPAPSRPQKMALIPACIFLYFAALSVQA) form the signal peptide. Substrate-binding positions include Arg-152, 159-160 (WD), Asn-196, 205-207 (RSQ), 277-279 (RPE), and Gly-310. Catalysis depends on proton donor/acceptor residues Asp-312 and Glu-496. Position 511 (Glu-511) interacts with substrate. The segment at 540-565 (DNVPATHPTVKSATTQPSTKEAQPTP) is disordered. Residues 548-565 (TVKSATTQPSTKEAQPTP) are compositionally biased toward polar residues.

The protein belongs to the glycosyl hydrolase 37 family. Monomer.

The protein resides in the periplasm. The catalysed reaction is alpha,alpha-trehalose + H2O = alpha-D-glucose + beta-D-glucose. Its function is as follows. Provides the cells with the ability to utilize trehalose at high osmolarity by splitting it into glucose molecules that can subsequently be taken up by the phosphotransferase-mediated uptake system. The sequence is that of Periplasmic trehalase from Shigella flexneri serotype 5b (strain 8401).